The sequence spans 113 residues: Hydrogenase maturation factor HypA (113 aa).

Ni(2+) is bound at residue His2. The Zn(2+) site is built by Cys73, Cys76, Cys89, and Cys92.

The protein belongs to the HypA/HybF family.

Its function is as follows. Involved in the maturation of [NiFe] hydrogenases. Required for nickel insertion into the metal center of the hydrogenase. The chain is Hydrogenase maturation factor HypA from Chlorobaculum parvum (strain DSM 263 / NCIMB 8327) (Chlorobium vibrioforme subsp. thiosulfatophilum).